The primary structure comprises 216 residues: ATP synthase subunit a (216 aa).

Helical transmembrane passes span 1–21 (MEYS…IFVL), 62–82 (LIAA…VPGF), 88–108 (NINT…FEGF), 119–139 (FMGP…ISHI), 149–169 (LFAN…LVIK), 174–194 (LVVS…AIFI), and 196–216 (TYIF…HEEH).

Belongs to the ATPase A chain family. As to quaternary structure, F-type ATPases have 2 components, CF(1) - the catalytic core - and CF(0) - the membrane proton channel. CF(1) has five subunits: alpha(3), beta(3), gamma(1), delta(1), epsilon(1). CF(0) has three main subunits: a(1), b(2) and c(9-12). The alpha and beta chains form an alternating ring which encloses part of the gamma chain. CF(1) is attached to CF(0) by a central stalk formed by the gamma and epsilon chains, while a peripheral stalk is formed by the delta and b chains.

It localises to the cell inner membrane. In terms of biological role, key component of the proton channel; it plays a direct role in the translocation of protons across the membrane. The sequence is that of ATP synthase subunit a from Aquifex aeolicus (strain VF5).